The sequence spans 324 residues: MAATAAAANGTGGSSGMEVDAAVVPSVMASGVTGSVSVALHPLVILNISDHWIRMRSQEGRPMQVIGALIGKQEGRNIEVMNSFELLSHTVEEKIIIDKEYYYTKEEQFKQVFKELDFLGWYTTGGPPDPSDIHVHKQVCEIIESPLFLKLNPMTKHTDLPVSVFESVIDIINGEATMLFAELTYTLATEEAERIGVDHVARMTATGSGENSTVAEHLIAQHSAIKMLHSRVKLILEYVKASEAGEVPFNHEILREAYALCHCLPVLSTDKFKTDFYDQCNDVGLMAYLGTITKTCNTMNQFVNKFNVLYDRQGIGRRMRGLFF.

The MPN domain maps to 38-171 (VALHPLVILN…VSVFESVIDI (134 aa)).

Belongs to the peptidase M67A family. CSN6 subfamily. Component of the CSN complex, composed of COPS1/GPS1, COPS2, COPS3, COPS4, COPS5, COPS6, COPS7 (COPS7A or COPS7B), COPS8 and COPS9. In the complex, it probably interacts directly with COPS2, COPS4, COPS5, COPS7 (COPS7A or COPS7B) and COPS9. Interacts with the translation initiation factor EIF3S6. Interacts weakly with RBX1. Directly interacts with COP1 and 14-3-3 protein sigma/SFN. Interacts with ERCC6.

The protein localises to the cytoplasm. The protein resides in the nucleus. Its function is as follows. Component of the COP9 signalosome complex (CSN), a complex involved in various cellular and developmental processes. The CSN complex is an essential regulator of the ubiquitin (Ubl) conjugation pathway by mediating the deneddylation of the cullin subunits of SCF-type E3 ligase complexes, leading to decrease the Ubl ligase activity of SCF-type complexes such as SCF, CSA or DDB2. The complex is also involved in phosphorylation of p53/TP53, c-jun/JUN, IkappaBalpha/NFKBIA, ITPK1 and IRF8, possibly via its association with CK2 and PKD kinases. CSN-dependent phosphorylation of TP53 and JUN promotes and protects degradation by the Ubl system, respectively. Has some glucocorticoid receptor-responsive activity. Stabilizes COP1 through reducing COP1 auto-ubiquitination and decelerating COP1 turnover rate, hence regulates the ubiquitination of COP1 targets, including SFN. The chain is COP9 signalosome complex subunit 6 (COPS6) from Bos taurus (Bovine).